Here is an 802-residue protein sequence, read N- to C-terminus: Probable inactive leucine-rich repeat receptor-like protein kinase At3g03770 (802 aa).

Positions 1–26 are cleaved as a signal peptide; sequence MEKLYCGMPLLLLVLLLASIDGSTQL. The Extracellular segment spans residues 27–391; the sequence is QSSQSQTLLR…RNKVSKVGIA (365 aa). N52 and N83 each carry an N-linked (GlcNAc...) asparagine glycan. LRR repeat units follow at residues 71–94, 104–128, 129–152, 153–176, 177–200, 201–225, 227–244, 245–268, 269–293, 294–317, and 319–341; these read EDSVTQLHIIGDNGTHMLPKSFSI, LPDVKVLTFVSLGLWGWLPQKINRL, SSLEILNVSSNFLFGPIPHELSSL, ATLQTLILDENMFSGELPDWIDSL, PSLAVLSLRKNVLNGSLPSSLSSL, SGLRVLALANNRFNGALPDLSHLTN, QVLDLEGNSFGPLFPRLS, NKLVTLILSKNKFRSAVSAEEVSS, LYQLQHLDLSYNTFVGPFPTSLMSL, PAITYLNISHNKLTGRLSANLSCN, and QLMFVDMSSNLLTGSLPTCLKPS. N-linked (GlcNAc...) asparagine glycosylation is present at N135. N190 carries N-linked (GlcNAc...) asparagine glycosylation. 2 N-linked (GlcNAc...) asparagine glycosylation sites follow: N300 and N313. A helical transmembrane segment spans residues 392–412; it reads LGVTASILGVLLLAGALFVVL. Over 413 to 802 the chain is Cytoplasmic; that stretch reads RRLNAKKTVT…RDSGCEEHER (390 aa). The Protein kinase domain maps to 477–759; that stretch reads FESSAFMGEG…FASQVQEGWL (283 aa). A disordered region spans residues 761 to 802; that stretch reads NSNPSSNLGSPSPAASSLPPPSRLHVTTLESPRDSGCEEHER. Residues 762–777 are compositionally biased toward low complexity; it reads SNPSSNLGSPSPAASS. Residues 791–802 are compositionally biased toward basic and acidic residues; that stretch reads SPRDSGCEEHER.

It belongs to the protein kinase superfamily. Ser/Thr protein kinase family.

The protein resides in the cell membrane. This Arabidopsis thaliana (Mouse-ear cress) protein is Probable inactive leucine-rich repeat receptor-like protein kinase At3g03770.